Here is a 969-residue protein sequence, read N- to C-terminus: Isoleucine--tRNA ligase (969 aa).

The 'HIGH' region signature appears at proline 68–histidine 78. Glutamate 585 lines the L-isoleucyl-5'-AMP pocket. The short motif at lysine 626–serine 630 is the 'KMSKS' region element. An ATP-binding site is contributed by lysine 629. Zn(2+)-binding residues include cysteine 939, cysteine 942, cysteine 959, and cysteine 962.

The protein belongs to the class-I aminoacyl-tRNA synthetase family. IleS type 1 subfamily. As to quaternary structure, monomer. The cofactor is Zn(2+).

The protein resides in the cytoplasm. It carries out the reaction tRNA(Ile) + L-isoleucine + ATP = L-isoleucyl-tRNA(Ile) + AMP + diphosphate. Functionally, catalyzes the attachment of isoleucine to tRNA(Ile). As IleRS can inadvertently accommodate and process structurally similar amino acids such as valine, to avoid such errors it has two additional distinct tRNA(Ile)-dependent editing activities. One activity is designated as 'pretransfer' editing and involves the hydrolysis of activated Val-AMP. The other activity is designated 'posttransfer' editing and involves deacylation of mischarged Val-tRNA(Ile). The sequence is that of Isoleucine--tRNA ligase from Prochlorococcus marinus (strain MIT 9211).